A 906-amino-acid polypeptide reads, in one-letter code: Protein translocase subunit SecA (906 aa).

Residues glutamine 86, 104 to 108 (GEGKT), and aspartate 499 contribute to the ATP site. Residues cysteine 890, cysteine 892, cysteine 901, and histidine 902 each coordinate Zn(2+).

Belongs to the SecA family. As to quaternary structure, monomer and homodimer. Part of the essential Sec protein translocation apparatus which comprises SecA, SecYEG and auxiliary proteins SecDF-YajC and YidC. Requires Zn(2+) as cofactor.

It is found in the cell inner membrane. The protein localises to the cytoplasm. It catalyses the reaction ATP + H2O + cellular proteinSide 1 = ADP + phosphate + cellular proteinSide 2.. In terms of biological role, part of the Sec protein translocase complex. Interacts with the SecYEG preprotein conducting channel. Has a central role in coupling the hydrolysis of ATP to the transfer of proteins into and across the cell membrane, serving both as a receptor for the preprotein-SecB complex and as an ATP-driven molecular motor driving the stepwise translocation of polypeptide chains across the membrane. This Rickettsia prowazekii (strain Madrid E) protein is Protein translocase subunit SecA.